Reading from the N-terminus, the 402-residue chain is Alanine racemase (402 aa).

The Proton acceptor; specific for D-alanine role is filled by Lys-34. Lys-34 bears the N6-(pyridoxal phosphate)lysine mark. Arg-133 contributes to the substrate binding site. An RPE1 insert domain is found at 226 to 271 (EVSYNLSYKEKFERNTPALATTVCINKCADVNTRLTYKVPLKGSYR). Tyr-296 (proton acceptor; specific for L-alanine) is an active-site residue. Met-344 serves as a coordination point for substrate.

The protein belongs to the alanine racemase family. The cofactor is pyridoxal 5'-phosphate.

It catalyses the reaction L-alanine = D-alanine. The protein operates within amino-acid biosynthesis; D-alanine biosynthesis; D-alanine from L-alanine: step 1/1. Its function is as follows. Catalyzes the interconversion of L-alanine and D-alanine. May also act on other amino acids. This chain is Alanine racemase (alr), found in Rickettsia typhi (strain ATCC VR-144 / Wilmington).